The primary structure comprises 184 residues: MSGKLTVITGPMYSGKTTELLSFVEIYKLGKKKVAVFKPKIDSRYHSTMIVSHSGNGVEAHVIERPEEMRKYIEEDTRGVFIDEVQFFNPSLFEVVKDLLDRGIDVFCAGLDLTHKQNPFETTALLLSLADTVIKKKAVCHRCGEYNATLTLKVAGGEEEIDVGGQEKYIAVCRDCYNTLKKRV.

ATP-binding positions include 10–17 (GPMYSGKT), H53, and 83–86 (DEVQ). E84 functions as the Proton acceptor in the catalytic mechanism. H115 provides a ligand contact to substrate. Positions 140 and 143 each coordinate Zn(2+). Substrate is bound by residues 161–164 (IDVG) and Y169. Positions 173 and 176 each coordinate Zn(2+).

The protein belongs to the thymidine kinase family. In terms of assembly, homotetramer.

The protein resides in the cytoplasm. The enzyme catalyses thymidine + ATP = dTMP + ADP + H(+). In Thermotoga maritima (strain ATCC 43589 / DSM 3109 / JCM 10099 / NBRC 100826 / MSB8), this protein is Thymidine kinase (tdk).